The sequence spans 276 residues: Malonyl-[acyl-carrier protein] O-methyltransferase (276 aa).

The protein belongs to the methyltransferase superfamily.

It catalyses the reaction malonyl-[ACP] + S-adenosyl-L-methionine = malonyl-[ACP] methyl ester + S-adenosyl-L-homocysteine. It functions in the pathway cofactor biosynthesis; biotin biosynthesis. Its function is as follows. Converts the free carboxyl group of a malonyl-thioester to its methyl ester by transfer of a methyl group from S-adenosyl-L-methionine (SAM). It allows to synthesize pimeloyl-ACP via the fatty acid synthetic pathway. This is Malonyl-[acyl-carrier protein] O-methyltransferase from Paenibacillus sp. (strain JDR-2).